Consider the following 57-residue polypeptide: Small ribosomal subunit protein bS21 (57 aa).

Positions 35–57 (REFYEKPSVRRKKKSEAARKRKY) are disordered. Positions 43–57 (VRRKKKSEAARKRKY) are enriched in basic residues.

It belongs to the bacterial ribosomal protein bS21 family.

The protein is Small ribosomal subunit protein bS21 of Bacillus licheniformis (strain ATCC 14580 / DSM 13 / JCM 2505 / CCUG 7422 / NBRC 12200 / NCIMB 9375 / NCTC 10341 / NRRL NRS-1264 / Gibson 46).